The primary structure comprises 805 residues: Mediator of RNA polymerase II transcription subunit 25 (805 aa).

2 disordered regions span residues 430-455 (GSAQNTQNSAPSSFTSTAPSMSGQTV) and 786-805 (SQSQGSSQGLPITPGGGFMN). Low complexity-rich tracts occupy residues 438-451 (SAPSSFTSTAPSMS) and 786-795 (SQSQGSSQGL).

This sequence belongs to the Mediator complex subunit 25 family. Interacts with MYC2 (via N-terminus). MED25 competes with JAZ7 for binding to MYC2.

Its function is as follows. Component of the Mediator complex, a coactivator involved in the regulated transcription of nearly all RNA polymerase II-dependent genes. Mediator functions as a bridge to convey information from gene-specific regulatory proteins to the basal RNA polymerase II transcription machinery. Mediator is recruited to promoters by direct interactions with regulatory proteins and serves as a scaffold for the assembly of a functional pre-initiation complex with RNA polymerase II and the general transcription factors. Plays a positive role in wound-induced activation of jasmonate-responsive genes whose promoters are targeted by MYC2. In Solanum lycopersicum (Tomato), this protein is Mediator of RNA polymerase II transcription subunit 25.